The primary structure comprises 504 residues: D-alanine--D-alanyl carrier protein ligase (504 aa).

152 to 153 (TS) is an ATP binding site. Asp-197 lines the D-alanine pocket. Residue 292–297 (NTYGPT) participates in ATP binding. Val-301 serves as a coordination point for D-alanine. Residues Asp-383, 394–397 (YNGR), and Lys-492 each bind ATP. Lys-492 contacts D-alanine.

Belongs to the ATP-dependent AMP-binding enzyme family. DltA subfamily.

Its subcellular location is the cytoplasm. The catalysed reaction is holo-[D-alanyl-carrier protein] + D-alanine + ATP = D-alanyl-[D-alanyl-carrier protein] + AMP + diphosphate. It participates in cell wall biogenesis; lipoteichoic acid biosynthesis. Its function is as follows. Catalyzes the first step in the D-alanylation of lipoteichoic acid (LTA), the activation of D-alanine and its transfer onto the D-alanyl carrier protein (Dcp) DltC. In an ATP-dependent two-step reaction, forms a high energy D-alanyl-AMP intermediate, followed by transfer of the D-alanyl residue as a thiol ester to the phosphopantheinyl prosthetic group of the Dcp. D-alanylation of LTA plays an important role in modulating the properties of the cell wall in Gram-positive bacteria, influencing the net charge of the cell wall. The protein is D-alanine--D-alanyl carrier protein ligase of Bacillus cereus (strain Q1).